A 257-amino-acid polypeptide reads, in one-letter code: uncharacterized protein (257 aa).

This is an uncharacterized protein from Bacillus subtilis (strain 168).